The following is a 143-amino-acid chain: Transcriptional regulator MraZ (143 aa).

2 SpoVT-AbrB domains span residues 5-47 and 76-119; these read TFTP…PRNV and ADEQ…NAES.

Belongs to the MraZ family. Forms oligomers.

The protein localises to the cytoplasm. It is found in the nucleoid. This chain is Transcriptional regulator MraZ, found in Corynebacterium kroppenstedtii (strain DSM 44385 / JCM 11950 / CIP 105744 / CCUG 35717).